The chain runs to 148 residues: Cytochrome c-type biogenesis protein CcmE (148 aa).

At 1–7 the chain is on the cytoplasmic side; sequence MKPRHKK. The helical; Signal-anchor for type II membrane protein transmembrane segment at 8-28 threads the bilayer; sequence LAIIASSVTALGVASVLVLNA. The Periplasmic portion of the chain corresponds to 29–148; sequence FQSNLVFFFS…ADKARKTVMQ (120 aa). 2 residues coordinate heme: His-123 and Tyr-127.

The protein belongs to the CcmE/CycJ family.

It localises to the cell inner membrane. Functionally, heme chaperone required for the biogenesis of c-type cytochromes. Transiently binds heme delivered by CcmC and transfers the heme to apo-cytochromes in a process facilitated by CcmF and CcmH. This Nitrosospira multiformis (strain ATCC 25196 / NCIMB 11849 / C 71) protein is Cytochrome c-type biogenesis protein CcmE.